The chain runs to 873 residues: Programmed cell death 6-interacting protein (873 aa).

Residue Ala-2 is modified to N-acetylalanine. A BRO1 domain is found at 3-397; it reads SFIWVQLKKT…AQMREATTLA (395 aa). Residues 176–508 are interaction with CHMP4A, CHMP4B and CHMP4C; that stretch reads TVDISPDTVG…KFRAVLDKAV (333 aa). Residue Lys-215 is modified to N6-acetyllysine. Residues 423 to 873 are interaction with SDCBP; the sequence is LTKSTAVVEQ…PPQQSYYPQQ (451 aa). The residue at position 484 (Thr-484) is a Phosphothreonine. Ser-486 is subject to Phosphoserine. The interval 508–873 is self-association; sequence VQADGQVKER…PPQQSYYPQQ (366 aa). Disordered regions lie at residues 719-808 and 837-873; these read AREP…GPPY and PYPP…YPQQ. The tract at residues 722-725 is interaction with TSG101; sequence PSAP. Ser-735 is modified (phosphoserine). Phosphothreonine is present on residues Thr-742 and Thr-745. Residues 745–767 show a composition bias toward pro residues; it reads TPAPRTMPPAKPQPPARPPPPVL. At Arg-749 the chain carries Omega-N-methylarginine. The segment covering 768–791 has biased composition (low complexity); sequence PANRVPPAAAATAPAGVGTASAAP. 2 stretches are compositionally biased toward pro residues: residues 792-808 and 849-865; these read PQTP…GPPY and APYP…PQPP. The tract at residues 802–811 is interaction with CEP55; sequence QAQGPPYPTY.

Self-associates. Interacts with SH3KBP1. Interacts with PDCD6 in a calcium-dependent manner. Interacts with TSG101 in a calcium-dependent manner; PDCD6IP homooligomerization may be required for TSG101-binding. Interacts with SGSM3. Directly interacts with CHMP4A, CHMP4B and CHMP4C. Directly interacts with CEP55 in a 1:2 stoechiometry; this interaction is required for PDCD6IP targeting to the midbody. May interact with PDGFRB. Interacts with SH3GL1 and SH3GL2/endophilin-1. Forms a complex with SDCBP and SDC2. Found in a complex with F-actin, TJP1/ZO-1 and PARD3. Interacts with CD2AP. Interacts with ARRDC1. Interacts (via BRO1 domain) with the ATG12-ATG3 conjugate; this interaction is bridged by ATG12 and promotes multiple PDCD6IP-mediated functions such as endolysosomal trafficking, macroautophagy and exosome biogenesis. Post-translationally, may be phosphorylated on tyrosine residues by activated PDGFRB. In terms of tissue distribution, expressed in astrocytes and glioma cells.

The protein localises to the cytoplasm. It localises to the cytosol. The protein resides in the melanosome. It is found in the cytoskeleton. Its subcellular location is the microtubule organizing center. The protein localises to the centrosome. It localises to the secreted. The protein resides in the extracellular exosome. It is found in the cell junction. Its subcellular location is the tight junction. The protein localises to the midbody. It localises to the midbody ring. Its function is as follows. Multifunctional protein involved in endocytosis, multivesicular body biogenesis, membrane repair, cytokinesis, apoptosis and maintenance of tight junction integrity. Class E VPS protein involved in concentration and sorting of cargo proteins of the multivesicular body (MVB) for incorporation into intralumenal vesicles (ILVs) that are generated by invagination and scission from the limiting membrane of the endosome. Binds to the phospholipid lysobisphosphatidic acid (LBPA) which is abundant in MVBs internal membranes. The MVB pathway requires the sequential function of ESCRT-O, -I,-II and -III complexes. The ESCRT machinery also functions in topologically equivalent membrane fission events, such as the terminal stages of cytokinesis. Adapter for a subset of ESCRT-III proteins, such as CHMP4, to function at distinct membranes. Required for completion of cytokinesis. May play a role in the regulation of both apoptosis and cell proliferation. Regulates exosome biogenesis in concert with SDC1/4 and SDCBP. By interacting with F-actin, PARD3 and TJP1 secures the proper assembly and positioning of actomyosin-tight junction complex at the apical sides of adjacent epithelial cells that defines a spatial membrane domain essential for the maintenance of epithelial cell polarity and barrier. The protein is Programmed cell death 6-interacting protein of Rattus norvegicus (Rat).